Consider the following 542-residue polypeptide: Putative CTP synthase (542 aa).

The amidoligase domain stretch occupies residues 1–277; the sequence is MEIDLMKHIQ…HKTILDFFSL (277 aa). Residue S23 participates in CTP binding. UTP is bound at residue S23. ATP contacts are provided by residues 24-29 and D81; that span reads SLGKGV. Mg(2+)-binding residues include D81 and E151. CTP contacts are provided by residues 158–160, 198–203, and K234; these read DIE and KTKPTQ. UTP is bound by residues 198–203 and K234; that span reads KTKPTQ. Positions 310–542 constitute a Glutamine amidotransferase type-1 domain; sequence YVELPDAYKS…LKMSLKIKES (233 aa). E517 is a catalytic residue.

The protein belongs to the CTP synthase family. In terms of assembly, homotetramer.

The enzyme catalyses UTP + L-glutamine + ATP + H2O = CTP + L-glutamate + ADP + phosphate + 2 H(+). It carries out the reaction L-glutamine + H2O = L-glutamate + NH4(+). The catalysed reaction is UTP + NH4(+) + ATP = CTP + ADP + phosphate + 2 H(+). The protein operates within pyrimidine metabolism; CTP biosynthesis via de novo pathway; CTP from UDP: step 2/2. Allosterically activated by GTP, when glutamine is the substrate; GTP has no effect on the reaction when ammonia is the substrate. The allosteric effector GTP functions by stabilizing the protein conformation that binds the tetrahedral intermediate(s) formed during glutamine hydrolysis. Inhibited by the product CTP, via allosteric rather than competitive inhibition. Its function is as follows. Catalyzes the ATP-dependent amination of UTP to CTP with either L-glutamine or ammonia as the source of nitrogen. Regulates intracellular CTP levels through interactions with the four ribonucleotide triphosphates. The polypeptide is Putative CTP synthase (Ureaplasma parvum serovar 3 (strain ATCC 700970)).